The primary structure comprises 350 residues: Induced myeloid leukemia cell differentiation protein Mcl-1 homolog (350 aa).

Lysine 5 is covalently cross-linked (Glycyl lysine isopeptide (Lys-Gly) (interchain with G-Cter in ubiquitin)). Positions 23-95 (AGSGGASSSG…GPNVSATPPR (73 aa)) are disordered. Positions 31–41 (SGGRLLASGRE) are enriched in low complexity. The segment covering 50–61 (GGEAGAVIGGSA) has biased composition (gly residues). The PEST-like stretch occupies residues 104 to 175 (RASPPEEMEG…PAEEEEDELY (72 aa)). Serine 121 bears the Phosphoserine mark. Lysine 136 is covalently cross-linked (Glycyl lysine isopeptide (Lys-Gly) (interchain with G-Cter in ubiquitin)). A disordered region spans residues 150–169 (ASSGPGMDGSLPSTPPPAEE). Phosphoserine; by GSK3-alpha and GSK3-beta is present on serine 159. A Phosphoserine modification is found at serine 162. Threonine 163 bears the Phosphothreonine mark. Glycyl lysine isopeptide (Lys-Gly) (interchain with G-Cter in ubiquitin) cross-links involve residues lysine 194 and lysine 197. The BH3 signature appears at 209-223 (ALETLQRVGDGVQRN). Positions 252–272 (HVFSDGVTNWGRIVTLISFGA) match the BH1 motif. The BH2 motif lies at 304 to 319 (DWLVKQRGWDGFVEFF). Residues 327–349 (GIRNVLLAFAGVAGVGAGLAYLI) traverse the membrane as a helical segment.

The protein belongs to the Bcl-2 family. As to quaternary structure, interacts with HIF3A (via C-terminus domain). Interacts with BOK, BIK, BAX, BAK1, and TPT1. Interacts with unphosphorylated BAD. Interacts with BMF, BBC3 and PMAIP1. Interacts with BOP. Interacts with BCL2L11; may sequester BCL2L11 to prevent its pro-apoptotic activity. Interacts with GIMAP5 and HSPA8/HSC70; the interaction between HSPA8 and MCL1 is impaired in the absence of GIMAP5. In terms of processing, cleaved by CASP3 during apoptosis, yielding a pro-apoptotic C-terminal fragment. Post-translationally, rapidly degraded in the absence of phosphorylation in the PEST region. Phosphorylated on Ser-159, by GSK3, in response to IL3/interleukin-3 withdrawal. Phosphorylation at Ser-159 induces ubiquitination and proteasomal degradation, abrogating the anti-apoptotic activity. Treatment with taxol or okadaic acid induces phosphorylation on additional sites. In terms of processing, ubiquitinated. Ubiquitination is induced by phosphorylation at Ser-159. Deubiquitinated by USP20; leading to increased stability. In terms of tissue distribution, detected in peripheral blood mononuclear cells and bone marrow.

The protein resides in the membrane. It localises to the cytoplasm. It is found in the mitochondrion. Its subcellular location is the nucleus. The protein localises to the nucleoplasm. Involved in the regulation of apoptosis versus cell survival, and in the maintenance of viability but not of proliferation. Mediates its effects by interactions with a number of other regulators of apoptosis. The protein is Induced myeloid leukemia cell differentiation protein Mcl-1 homolog (MCL1) of Canis lupus familiaris (Dog).